Here is a 345-residue protein sequence, read N- to C-terminus: D-erythrose-4-phosphate dehydrogenase (345 aa).

11-12 (RI) provides a ligand contact to NAD(+). Substrate is bound by residues 158-160 (SCT), Arg204, 217-218 (TK), and Arg240. Catalysis depends on Cys159, which acts as the Nucleophile. Asn322 lines the NAD(+) pocket.

The protein belongs to the glyceraldehyde-3-phosphate dehydrogenase family. Epd subfamily. In terms of assembly, homotetramer.

It is found in the cytoplasm. The catalysed reaction is D-erythrose 4-phosphate + NAD(+) + H2O = 4-phospho-D-erythronate + NADH + 2 H(+). Its pathway is cofactor biosynthesis; pyridoxine 5'-phosphate biosynthesis; pyridoxine 5'-phosphate from D-erythrose 4-phosphate: step 1/5. Its function is as follows. Catalyzes the NAD-dependent conversion of D-erythrose 4-phosphate to 4-phosphoerythronate. This Vibrio parahaemolyticus serotype O3:K6 (strain RIMD 2210633) protein is D-erythrose-4-phosphate dehydrogenase.